The following is a 146-amino-acid chain: MIIKIHNQTSFCITPFKSLLIKMFLPIKEKKLMHLIFVTNEKIQELNSFYRQKNYPTDVLSFPNDLTFFAGLEDNSLGDVFISFSKAQVQAQTAKHSLEREIAFLAVHGFLHLKGYQHRTEEEFQIMLALQEKILQNVGLNLDKTT.

Zn(2+) contacts are provided by His-108, His-112, and His-118.

This sequence belongs to the endoribonuclease YbeY family. Zn(2+) serves as cofactor.

The protein localises to the cytoplasm. Functionally, single strand-specific metallo-endoribonuclease involved in late-stage 70S ribosome quality control and in maturation of the 3' terminus of the 16S rRNA. The chain is Endoribonuclease YbeY from Onion yellows phytoplasma (strain OY-M).